The chain runs to 722 residues: Polyribonucleotide nucleotidyltransferase (722 aa).

Mg(2+) contacts are provided by Asp487 and Asp493. Residues 554-613 (PRIETFKIPTDKIREVIGTGGKVIREIVEKTGAKVNIEDDGTVKVASSDGESIKAAIKWI) form the KH domain. The 69-residue stretch at 623 to 691 (GEIYEGTVVK…DRGKTRLSMK (69 aa)) folds into the S1 motif domain. Residues 697–722 (TGEDLEAKQKAEAKAEGEAPAQAAGE) form a disordered region. The segment covering 701 to 713 (LEAKQKAEAKAEG) has biased composition (basic and acidic residues).

Belongs to the polyribonucleotide nucleotidyltransferase family. Mg(2+) is required as a cofactor.

It localises to the cytoplasm. The enzyme catalyses RNA(n+1) + phosphate = RNA(n) + a ribonucleoside 5'-diphosphate. In terms of biological role, involved in mRNA degradation. Catalyzes the phosphorolysis of single-stranded polyribonucleotides processively in the 3'- to 5'-direction. This Rhodopseudomonas palustris (strain ATCC BAA-98 / CGA009) protein is Polyribonucleotide nucleotidyltransferase.